Consider the following 349-residue polypeptide: Neutral protease 2 homolog ACLA_052720 (349 aa).

An N-terminal signal peptide occupies residues 1–19 (MQLTVLASAILALAQGALA). Positions 20–172 (IPAKAPALDV…PAAINLLDRR (153 aa)) are excised as a propeptide. 2 disulfide bridges follow: Cys-178–Cys-250 and Cys-257–Cys-275. Residue His-300 participates in Zn(2+) binding. Residue Glu-301 is part of the active site. Zn(2+) contacts are provided by His-304 and Asp-315.

It belongs to the peptidase M35 family. Zn(2+) is required as a cofactor.

It localises to the secreted. It catalyses the reaction Preferential cleavage of bonds with hydrophobic residues in P1'. Also 3-Asn-|-Gln-4 and 8-Gly-|-Ser-9 bonds in insulin B chain.. Its function is as follows. Secreted metalloproteinase that allows assimilation of proteinaceous substrates. Shows high activities on basic nuclear substrates such as histone and protamine. The sequence is that of Neutral protease 2 homolog ACLA_052720 from Aspergillus clavatus (strain ATCC 1007 / CBS 513.65 / DSM 816 / NCTC 3887 / NRRL 1 / QM 1276 / 107).